The sequence spans 263 residues: Ribosome maturation factor RimP (263 aa).

The segment at 192-263 (EREMKRDLGI…RGEIDPIEGE (72 aa)) is disordered. Residues 217-231 (PARRNAPKPKLKSTA) show a composition bias toward basic residues. Basic and acidic residues predominate over residues 232 to 257 (KAHEKKPPKNTKEHRLAAERLRRGEI).

This sequence belongs to the RimP family.

It is found in the cytoplasm. Required for maturation of 30S ribosomal subunits. The polypeptide is Ribosome maturation factor RimP (Nitrobacter hamburgensis (strain DSM 10229 / NCIMB 13809 / X14)).